We begin with the raw amino-acid sequence, 328 residues long: Basic leucine zipper (bZIP) transcription factor atfB (328 aa).

The disordered stretch occupies residues 1–39; sequence MLPEQSAFGRSAMPGSDAVNPGPSPFAPPPNSFSGDFLG. A compositionally biased stretch (pro residues) spans 22 to 31; it reads GPSPFAPPPN. The tract at residues 163–202 is basic motif; sequence KAKREKFLERNRLAASKCRQKKKEHTQLLESRYREQSDKK. The bZIP domain maps to 163–226; that stretch reads KAKREKFLER…LGLKNEVLKH (64 aa). The leucine-zipper stretch occupies residues 205–219; sequence LVSEIARLRSEILGL. The interval 250–313 is disordered; that stretch reads TTAPDLTDVP…SEASVLTENS (64 aa). Residues 262 to 277 are compositionally biased toward polar residues; sequence ASSSEGPMTPRPQQAL. Positions 283–305 are enriched in basic and acidic residues; sequence DPLHLEPSRADGSTDHSVRRDSE.

It belongs to the bZIP family. ATF subfamily.

Its subcellular location is the nucleus. Functionally, transcription factor that acts as a key player in the regulatory circuit that integrates secondary metabolism and cellular response to oxidative stress. Regulates the genes involved in development, as well as osmotic, oxidative, and cell wall stresses. Participates in the caspofungin paradoxical effect (CPE), where fungi grow beyond the minimum inhibitory concentration of caspofungin. Plays a role in virulence. In Aspergillus fumigatus (strain ATCC MYA-4609 / CBS 101355 / FGSC A1100 / Af293) (Neosartorya fumigata), this protein is Basic leucine zipper (bZIP) transcription factor atfB.